Reading from the N-terminus, the 264-residue chain is Ribosomal RNA small subunit methyltransferase A (264 aa).

The S-adenosyl-L-methionine site is built by N15, I17, G42, E64, D90, and N109.

Belongs to the class I-like SAM-binding methyltransferase superfamily. rRNA adenine N(6)-methyltransferase family. RsmA subfamily.

Its subcellular location is the cytoplasm. It carries out the reaction adenosine(1518)/adenosine(1519) in 16S rRNA + 4 S-adenosyl-L-methionine = N(6)-dimethyladenosine(1518)/N(6)-dimethyladenosine(1519) in 16S rRNA + 4 S-adenosyl-L-homocysteine + 4 H(+). Functionally, specifically dimethylates two adjacent adenosines (A1518 and A1519) in the loop of a conserved hairpin near the 3'-end of 16S rRNA in the 30S particle. May play a critical role in biogenesis of 30S subunits. This chain is Ribosomal RNA small subunit methyltransferase A, found in Wolbachia pipientis subsp. Culex pipiens (strain wPip).